A 113-amino-acid chain; its full sequence is MNTVRVTFLLVFVLAVSLGQADKDENRMEMQEKTEQGKSYLDFAENLLLQKLEELEAKLLEEDSEESRNSRQKRCIGEGVPCDENDPRCCSGLVCLKPTLHGIWYKSYYCYKK.

The signal sequence occupies residues 1 to 21 (MNTVRVTFLLVFVLAVSLGQA). A propeptide spanning residues 22 to 74 (DKDENRMEMQEKTEQGKSYLDFAENLLLQKLEELEAKLLEEDSEESRNSRQKR) is cleaved from the precursor. The tract at residues 61–83 (EEDSEESRNSRQKRCIGEGVPCD) is disordered. Disulfide bonds link C75–C90, C82–C95, and C89–C110.

Belongs to the neurotoxin 14 (magi-1) family. 01 (HNTX-16) subfamily. As to expression, expressed by the venom gland.

It is found in the secreted. Its function is as follows. Probable ion channel inhibitor. The chain is U11-theraphotoxin-Hhn1a from Cyriopagopus hainanus (Chinese bird spider).